The sequence spans 187 residues: Putative manganese efflux pump MntP (187 aa).

The next 6 helical transmembrane spans lie at 3–23, 35–55, 56–76, 107–127, 129–149, and 166–186; these read FYSL…VSLC, HYLI…TIGY, FIGI…AFIL, LALA…FAFL, VNLL…CIIA, and LLGG…HLFF.

Belongs to the MntP (TC 9.B.29) family.

The protein resides in the cell inner membrane. In terms of biological role, probably functions as a manganese efflux pump. This chain is Putative manganese efflux pump MntP, found in Campylobacter jejuni subsp. doylei (strain ATCC BAA-1458 / RM4099 / 269.97).